We begin with the raw amino-acid sequence, 450 residues long: UDP-N-acetylmuramoylalanine--D-glutamate ligase (450 aa).

119–125 (GSNGKTT) is a binding site for ATP.

Belongs to the MurCDEF family.

It localises to the cytoplasm. The enzyme catalyses UDP-N-acetyl-alpha-D-muramoyl-L-alanine + D-glutamate + ATP = UDP-N-acetyl-alpha-D-muramoyl-L-alanyl-D-glutamate + ADP + phosphate + H(+). It functions in the pathway cell wall biogenesis; peptidoglycan biosynthesis. Cell wall formation. Catalyzes the addition of glutamate to the nucleotide precursor UDP-N-acetylmuramoyl-L-alanine (UMA). The chain is UDP-N-acetylmuramoylalanine--D-glutamate ligase from Streptococcus pneumoniae (strain ATCC 700669 / Spain 23F-1).